The primary structure comprises 506 residues: D-alanine--D-alanyl carrier protein ligase (506 aa).

152–153 serves as a coordination point for ATP; that stretch reads TS. Residue Asp-197 coordinates D-alanine. 292–297 lines the ATP pocket; the sequence is NTYGPT. Val-301 provides a ligand contact to D-alanine. ATP-binding positions include Asp-383, 395-398, and Lys-494; that span reads YRGR. Residue Lys-494 coordinates D-alanine.

The protein belongs to the ATP-dependent AMP-binding enzyme family. DltA subfamily.

It localises to the cytoplasm. It carries out the reaction holo-[D-alanyl-carrier protein] + D-alanine + ATP = D-alanyl-[D-alanyl-carrier protein] + AMP + diphosphate. It participates in cell wall biogenesis; lipoteichoic acid biosynthesis. In terms of biological role, catalyzes the first step in the D-alanylation of lipoteichoic acid (LTA), the activation of D-alanine and its transfer onto the D-alanyl carrier protein (Dcp) DltC. In an ATP-dependent two-step reaction, forms a high energy D-alanyl-AMP intermediate, followed by transfer of the D-alanyl residue as a thiol ester to the phosphopantheinyl prosthetic group of the Dcp. D-alanylation of LTA plays an important role in modulating the properties of the cell wall in Gram-positive bacteria, influencing the net charge of the cell wall. This Lacticaseibacillus casei (strain BL23) (Lactobacillus casei) protein is D-alanine--D-alanyl carrier protein ligase.